Consider the following 293-residue polypeptide: uncharacterized protein (293 aa).

A disordered region spans residues 1–22; that stretch reads MTFNEGVQIDTSTTSTSGSGGG. A helical membrane pass occupies residues 25–45; it reads LAIGGGLGGLLVVVVAMLLGV. A disordered region spans residues 243-265; sequence GDDRIQQQTTGRTNPETWTHGSA. Over residues 248 to 265 the composition is skewed to polar residues; it reads QQQTTGRTNPETWTHGSA.

Its subcellular location is the membrane. This is an uncharacterized protein from Mycobacterium tuberculosis (strain CDC 1551 / Oshkosh).